The primary structure comprises 189 residues: Mediator of RNA polymerase II transcription subunit 30 (189 aa).

Positions serine 138–alanine 178 form a coiled coil.

Belongs to the plant Mediator complex subunit 30 family. Component of the Mediator complex.

The protein resides in the nucleus. Its function is as follows. Component of the Mediator complex, a coactivator involved in the regulated transcription of nearly all RNA polymerase II-dependent genes. Mediator functions as a bridge to convey information from gene-specific regulatory proteins to the basal RNA polymerase II transcription machinery. The Mediator complex, having a compact conformation in its free form, is recruited to promoters by direct interactions with regulatory proteins and serves for the assembly of a functional preinitiation complex with RNA polymerase II and the general transcription factors. This chain is Mediator of RNA polymerase II transcription subunit 30 (MED30), found in Arabidopsis thaliana (Mouse-ear cress).